A 1421-amino-acid polypeptide reads, in one-letter code: MRKRRLWWFVVLFRVTLVGAILPNETFDVRRYYADRFLIEDEENGSSRSYYISAESKAKAAEQFALLAPNCSLTSDIQENTCNETSSFCDHRVDSTYKTYHYEQEKCNCFIETCDEETNSTELMVLYPDCYCGKREKHCDLSKEKCHWTPDSDHDDLKFEVFESSNKVLFDYMLQAGSEKANLKMNKVSMVSKFFRQSGFNCSLRFMHHFTHQSSTSRLVVRSILQSGEKKNLYEHWLKPASVFWVPVQVAIGSYAEPFKISIDCETGFPPKKKKNKPFTCSIADIYFENCGEIRDPIEQCSRGDQFLCSISANTRCLQNAQCDSRIDCDDESDEMDCGNINGTMCDFNGQDYCNSWYQVTNVTDYHERLSEPTTVAPLNKLNEVPLHLFRLQSPSAKIKEAMRGSGNMLVFDHKPNPLTRRTSALVSPELPRTNPEAYDEKSPLFKSCKLRFYLCSRTYSKVWQISVISKGINPMESGRTIIYEAGYTLIPKENCTWERVFVNIPRQNAGFRIGIFVTNYFPGSEEYVAIDNLSFSPTCFERDINQSTWDIPDLFINTCGASGFEQPQNCDHNRELDGQTGHFLKEDGTQQWTVPVTGFYRMEICGAGGGSNSKASGDTGDCVTLQVHLIENLSLRMLIGQMGESPCFTEHDDELRPSSCSKISHNYVYDGKRGAAGGGATLLTVEKDLWNVVAGGGAGASWDGFDMEVGYGASAIHVKPDQRCNETCKAVSHTDFIVERRDNRCPGEKGESTVFGGFGGGGNSCGMLGGSGAGYQAGNPFGKSRARSGSSNVSIDFSKSPIYYQSERLDEGYIKIAFCRKRCEPPTVCRFRKDYFEEEYCGCPDGSNVTDTEEACAFPLVCPSSSTNQYRNFTYEPFCLCNNGKEIYDVYNDTCEEIQIWTLYNITFLIFAALTIIGALFVVYHYRNREKQMKQEILDLTQMKSPDYLYDDIYFGRTTRKAALDSLPSISRDSIERGRVLGRGNFGEVYYGEYSGVKLAVKMISRTFSASQASQSDFCNEALCMGTFVDENVVRLIGIDFEKVPYMIALEYMEGGDLLSFVKECRPNQVSLNPFQLAMSDLIKICCDVAAGCKCLETFGYVHRDIAARNILLTTRGPQRVAKIADFGMAKEITYGTEYYRINGRTMMPIKWTPPEAFIDGVFTTKSDIWSFGVLCWEVFSLGVVPYPNRRNEEVMLMLTEGARLEYPYGIPTRVYQLMRDCWKTAAADRPKFVDVVEIFQDIQDDPASVGMPFPIHPAVRATFAHSQSTPVSVETPMTAMTEISLNSTFTDASTVKVSAQQDMQDRIQLHELMLTREHPYTSELTSYVVNSIRKDLARVQYENGLTSVPQPEYLSPENNDESVQLIPQSNTVTDQTPPTSLIDLNRLGVQNTGPTLHRPDSLNFNDPYSSVPLLECQTR.

The first 20 residues, 1 to 20 (MRKRRLWWFVVLFRVTLVGA), serve as a signal peptide directing secretion. Residues 21–903 (ILPNETFDVR…DTCEEIQIWT (883 aa)) are Extracellular-facing. N-linked (GlcNAc...) asparagine glycosylation is found at Asn24, Asn44, Asn70, Asn83, Asn119, and Asn201. The 39-residue stretch at 300–338 (QCSRGDQFLCSISANTRCLQNAQCDSRIDCDDESDEMDC) folds into the LDL-receptor class A domain. 3 cysteine pairs are disulfide-bonded: Cys301/Cys317, Cys309/Cys329, and Cys323/Cys338. In terms of domain architecture, MAM spans 339–542 (GNINGTMCDF…NLSFSPTCFE (204 aa)). 11 N-linked (GlcNAc...) asparagine glycosylation sites follow: Asn342, Asn362, Asn495, Asn533, Asn546, Asn633, Asn726, Asn793, Asn849, Asn873, and Asn893. Residues 904–924 (LYNITFLIFAALTIIGALFVV) traverse the membrane as a helical segment. At 925-1421 (YHYRNREKQM…SVPLLECQTR (497 aa)) the chain is on the cytoplasmic side. Residues 976–1261 (IERGRVLGRG…GMPFPIHPAV (286 aa)) form the Protein kinase domain. Residues 982 to 990 (LGRGNFGEV) and Lys1003 contribute to the ATP site. Residue Asp1106 is the Proton acceptor of the active site.

The protein belongs to the protein kinase superfamily. Tyr protein kinase family. Insulin receptor subfamily. Interacts (via cytoplasmic domain) with fsn-1 (via SPRY domain). Expressed in AIA sensory neurons.

The protein localises to the cell membrane. It catalyses the reaction L-tyrosyl-[protein] + ATP = O-phospho-L-tyrosyl-[protein] + ADP + H(+). Its function is as follows. Probable tyrosine-protein kinase receptor which regulates the dauer/non-dauer developmental decision probably by controlling daf-3 transcriptional activity in parallel or together with the TGF-beta pathway. Regulates integration of conflicting sensory cues in AIA interneurons. May act as a receptor for hen-1. In AWA neurons, together with hen-1, plays a role in regulating olfactory adaptation by controlling the forgetting sensory responses to odorants such as diacetyl. The polypeptide is ALK tyrosine kinase receptor homolog scd-2 (Caenorhabditis elegans).